The sequence spans 194 residues: uncharacterized protein (194 aa).

Positions 6 to 66 (SGKYEKILQA…AIAENLLTHT (61 aa)) constitute an HTH tetR-type domain. Positions 29–48 (SISDIVKKAGTAQGTFYLYF) form a DNA-binding region, H-T-H motif.

This is an uncharacterized protein from Bacillus subtilis (strain 168).